A 265-amino-acid chain; its full sequence is Expansin-like A1 (265 aa).

The N-terminal stretch at 1–20 (MGSFLFLIVVIFLFSSSVNA) is a signal peptide. Positions 41-147 (SGACAYGSMA…QRVPCDYGNK (107 aa)) constitute an Expansin-like EG45 domain. A helical transmembrane segment spans residues 42–62 (GACAYGSMATSFFAGHIAAAI). N-linked (GlcNAc...) asparagine glycans are attached at residues asparagine 99 and asparagine 102. Positions 161–244 (NYLEIKLLYQ…NWEAGKIYDA (84 aa)) constitute an Expansin-like CBD domain.

Belongs to the expansin family. Expansin-like A subfamily.

The protein resides in the membrane. This chain is Expansin-like A1 (EXLA1), found in Arabidopsis thaliana (Mouse-ear cress).